The following is a 418-amino-acid chain: EPS I polysaccharide export inner membrane protein EpsF (418 aa).

10 consecutive transmembrane segments (helical) span residues 21–41, 45–65, 142–162, 170–190, 222–242, 262–282, 296–316, 326–346, 347–367, and 377–397; these read VLVV…FPIA, CAAI…LATA, PLMV…IAIY, YVVF…GSAI, AGTH…MLFL, LLVL…EFVM, SAWE…AWLF, LTYF…PAVG, ARLF…FFFA, and KTLA…IVDV.

The protein to S.marcescens SfuB.

Its subcellular location is the cell inner membrane. Functionally, probably involved in polymerization and/or export of exopolysaccharide EPS I which functions as a virulence factor. May play a role in export of EPS I or its intermediates across the membranes. The protein is EPS I polysaccharide export inner membrane protein EpsF (epsF) of Ralstonia solanacearum (Pseudomonas solanacearum).